The chain runs to 235 residues: LexA repressor (235 aa).

A DNA-binding region (H-T-H motif) is located at residues 26-46; sequence FDEMKDALDLKSKSGIHRLIT. Active-site for autocatalytic cleavage activity residues include Ser-156 and Lys-194.

This sequence belongs to the peptidase S24 family. Homodimer.

It carries out the reaction Hydrolysis of Ala-|-Gly bond in repressor LexA.. Represses a number of genes involved in the response to DNA damage (SOS response), including recA and lexA. In the presence of single-stranded DNA, RecA interacts with LexA causing an autocatalytic cleavage which disrupts the DNA-binding part of LexA, leading to derepression of the SOS regulon and eventually DNA repair. In Paramagnetospirillum magneticum (strain ATCC 700264 / AMB-1) (Magnetospirillum magneticum), this protein is LexA repressor.